The following is a 148-amino-acid chain: MRTTFLAKPGEIERKWYVVDATDIPLGRLSSVVASILRGKNKPQFTPNVDTGDNVIIINASKLKLTGKKASDKIYYHHSQHPGGLKHEIAGDLLRDNPARLVEYSVKKMLPTKNTLGHQQFLKLHVYAGEEHPHLAQKPEVLDISNLI.

The protein belongs to the universal ribosomal protein uL13 family. As to quaternary structure, part of the 50S ribosomal subunit.

Functionally, this protein is one of the early assembly proteins of the 50S ribosomal subunit, although it is not seen to bind rRNA by itself. It is important during the early stages of 50S assembly. The polypeptide is Large ribosomal subunit protein uL13 (Lacticaseibacillus casei (strain BL23) (Lactobacillus casei)).